Reading from the N-terminus, the 88-residue chain is MIKNAFISFQEQKEESRGSVEFQVFIFTNKIRRLTSHLELHRKDYLSQRGLRKILGKRQRLLAYLSKKNRVRYKELINQLNIRELKTR.

It belongs to the universal ribosomal protein uS15 family. In terms of assembly, part of the 30S ribosomal subunit.

The protein localises to the plastid. Its subcellular location is the chloroplast. The polypeptide is Small ribosomal subunit protein uS15c (rps15) (Lepidium virginicum (Virginia pepperweed)).